The following is a 1009-amino-acid chain: Probable beta-galactosidase B (1009 aa).

An N-terminal signal peptide occupies residues 1-21; sequence MAQLFTKIIVYFLLFASPLLA. N28 carries N-linked (GlcNAc...) asparagine glycosylation. Y85 lines the substrate pocket. The N-linked (GlcNAc...) asparagine glycan is linked to N95. Substrate is bound by residues N130, A131, E132, and N190. The active-site Proton donor is E191. N247 carries N-linked (GlcNAc...) asparagine glycosylation. Position 260 (Y260) interacts with substrate. An intrachain disulfide couples C266 to C319. E303 acts as the Nucleophile in catalysis. Y368 is a binding site for substrate. 10 N-linked (GlcNAc...) asparagine glycosylation sites follow: N375, N406, N427, N451, N682, N740, N771, N784, N826, and N883.

The protein belongs to the glycosyl hydrolase 35 family.

Its subcellular location is the secreted. The catalysed reaction is Hydrolysis of terminal non-reducing beta-D-galactose residues in beta-D-galactosides.. Cleaves beta-linked terminal galactosyl residues from gangliosides, glycoproteins, and glycosaminoglycans. In Talaromyces marneffei (strain ATCC 18224 / CBS 334.59 / QM 7333) (Penicillium marneffei), this protein is Probable beta-galactosidase B (lacB).